The sequence spans 302 residues: Recombination-associated protein RdgC (302 aa).

This sequence belongs to the RdgC family.

It is found in the cytoplasm. The protein localises to the nucleoid. In terms of biological role, may be involved in recombination. This chain is Recombination-associated protein RdgC, found in Actinobacillus pleuropneumoniae serotype 3 (strain JL03).